The primary structure comprises 96 residues: Large ribosomal subunit protein bL28 (96 aa).

Belongs to the bacterial ribosomal protein bL28 family.

In Methylobacterium nodulans (strain LMG 21967 / CNCM I-2342 / ORS 2060), this protein is Large ribosomal subunit protein bL28.